The primary structure comprises 338 residues: Pseudouridylate synthase TRUB1 (338 aa).

Alanine 2 bears the N-acetylalanine mark. The Nucleophile role is filled by aspartate 109.

It belongs to the pseudouridine synthase TruB family.

It is found in the nucleus. It localises to the cytoplasm. The protein resides in the cytosol. It catalyses the reaction a uridine in mRNA = a pseudouridine in mRNA. The catalysed reaction is a uridine in tRNA = a pseudouridine in tRNA. It carries out the reaction uridine(55) in tRNA = pseudouridine(55) in tRNA. Functionally, pseudouridine synthase that catalyzes pseudouridylation of mRNAs and tRNAs. Mediates pseudouridylation of mRNAs with the consensus sequence 5'-GUUCNANNC-3', harboring a stem-loop structure. Constitutes the major pseudouridine synthase acting on mRNAs. Also catalyzes pseudouridylation of some tRNAs, including synthesis of pseudouridine(55) from uracil-55, in the psi GC loop of a subset of tRNAs. Promotes the processing of pri-let-7 microRNAs (pri-miRNAs) independently of its RNA pseudouridylate synthase activity. Acts by binding to the stem-loop structure on pri-let-7, preventing LIN28-binding (LIN28A and/or LIN28B), thereby enhancing the interaction between pri-let-7 and the microprocessor DGCR8, which mediates miRNA maturation. The sequence is that of Pseudouridylate synthase TRUB1 from Mus musculus (Mouse).